The sequence spans 141 residues: VLSSKDKTNVKTAFGKIGGHAAEYGAEALERMFLGFPTTKTYFPHFDLSHGSAQVKAHGKKVGDALTKAADHLDDLPSALSALSDLHAHKLRVDPVNFKLLSHCLLVTVAAHHPGDFTPSVHASLDKFLANVSTVLTSKYR.

The Globin domain maps to 1–141 (VLSSKDKTNV…VSTVLTSKYR (141 aa)). Ser-3 is modified (phosphoserine). Residue Lys-7 is modified to N6-succinyllysine. Thr-8 carries the phosphothreonine modification. The residue at position 11 (Lys-11) is an N6-succinyllysine. Lys-16 carries the N6-acetyllysine; alternate modification. The residue at position 16 (Lys-16) is an N6-succinyllysine; alternate. Residue Tyr-24 is modified to Phosphotyrosine. An N6-succinyllysine modification is found at Lys-40. Ser-49 is modified (phosphoserine). His-58 provides a ligand contact to O2. A heme b-binding site is contributed by His-87. Ser-102 carries the phosphoserine modification. Thr-108 bears the Phosphothreonine mark. Phosphoserine is present on Ser-124. Phosphothreonine occurs at positions 134 and 137. Ser-138 bears the Phosphoserine mark.

It belongs to the globin family. Heterotetramer of two alpha chains and two beta chains. Red blood cells.

Its function is as follows. Involved in oxygen transport from the lung to the various peripheral tissues. Functionally, hemopressin acts as an antagonist peptide of the cannabinoid receptor CNR1. Hemopressin-binding efficiently blocks cannabinoid receptor CNR1 and subsequent signaling. The protein is Hemoglobin subunit alpha (HBA) of Camelus dromedarius (Dromedary).